A 162-amino-acid chain; its full sequence is SsrA-binding protein (162 aa).

The tract at residues 140–162 (DKRETAAKRDWSRQKSRLMKDHG) is disordered.

This sequence belongs to the SmpB family.

The protein localises to the cytoplasm. Functionally, required for rescue of stalled ribosomes mediated by trans-translation. Binds to transfer-messenger RNA (tmRNA), required for stable association of tmRNA with ribosomes. tmRNA and SmpB together mimic tRNA shape, replacing the anticodon stem-loop with SmpB. tmRNA is encoded by the ssrA gene; the 2 termini fold to resemble tRNA(Ala) and it encodes a 'tag peptide', a short internal open reading frame. During trans-translation Ala-aminoacylated tmRNA acts like a tRNA, entering the A-site of stalled ribosomes, displacing the stalled mRNA. The ribosome then switches to translate the ORF on the tmRNA; the nascent peptide is terminated with the 'tag peptide' encoded by the tmRNA and targeted for degradation. The ribosome is freed to recommence translation, which seems to be the essential function of trans-translation. The sequence is that of SsrA-binding protein from Roseobacter denitrificans (strain ATCC 33942 / OCh 114) (Erythrobacter sp. (strain OCh 114)).